The following is a 388-amino-acid chain: Reducing end xylose-releasing exo-oligoxylanase (388 aa).

Residue E70 is the Proton donor of the active site. D263 serves as the catalytic Proton acceptor.

This sequence belongs to the glycosyl hydrolase 8 (cellulase D) family.

It catalyses the reaction Hydrolysis of (1-&gt;4)-beta-D-xylose residues from the reducing end of oligosaccharides.. Hydrolyzes xylooligosaccharides with a degree of polymerization of greater than or equal to 3, releasing xylose from the reducing end. Only hydrolyzes the beta anomers of xylooligosaccharides, with inversion of anomeric configuration. Hydrolyzes the glucose and xylose-based trisaccharides where xylose is located at the -1 subsite, GXX, XXG and GXG. Does not hydrolyze xylan, chitosan, lichenan, curdlan or carboxymethylcellulose. In Halalkalibacterium halodurans (strain ATCC BAA-125 / DSM 18197 / FERM 7344 / JCM 9153 / C-125) (Bacillus halodurans), this protein is Reducing end xylose-releasing exo-oligoxylanase.